Consider the following 609-residue polypeptide: Protein FRIGIDA (609 aa).

Over residues 1–18 (MSNYPPTVAAQPTTTANP) the composition is skewed to low complexity. The disordered stretch occupies residues 1–31 (MSNYPPTVAAQPTTTANPLLQRHQSEQRRRE). Coiled coils occupy residues 60–97 (DELA…LESN) and 409–440 (QIKE…LMEE). Disordered regions lie at residues 454–488 (RPRL…DDQD) and 587–609 (SEER…LDPK). Residues 474 to 484 (YRDRSFPSQRD) show a composition bias toward basic and acidic residues. A compositionally biased stretch (polar residues) spans 594-609 (LSNQRSPRSNSSLDPK).

The protein belongs to the Frigida family. In terms of assembly, homodimer. Component of the transcription activator complex FRI-C composed of FRI, FRL1, SUF4, FLX and FES1. Interacts (via N-terminus) with FRL1 and (via C-terminus) with FLX (via N-terminus), SUF4 (via C-terminus) and FES1 (via C-terminus). Interacts with ASHH2 and RIN1, a component of the SWR1 chromatin-remodeling complex. Interacts with CBP20, FIP1 and FIP2. Expressed in ovules, but not in stamens.

It localises to the nucleus speckle. In terms of biological role, required for the regulation of flowering time in the late-flowering phenotype. Involved in the enrichment of a WDR5A-containing COMPASS-like complex at the 'FLOWERING LOCUS C' that trimethylates histone H3 'Lys-4', leading to FLC up-regulation and RNA levels increase. Variants with an early-flowering phenotype (Including cv. Columbia, cv. Landsberg Erecta and cv. Wassilewskija) show loss-of-function mutations of FRI. Able to delay flowering independently of FRL1 activity. Dispensable for the reactivation of FLC in early embryogenesis, but required to maintain high levels of FLC expression in later embryonic and vegetative development. Suppresses the repression of FLC by the autonomous pathway, but has no effect on the expression of the genes involved in this pathway. This chain is Protein FRIGIDA, found in Arabidopsis thaliana (Mouse-ear cress).